We begin with the raw amino-acid sequence, 911 residues long: MASSQTSQTVAAHVPFADLCSTLERIQKGKDRAEKIRHFKEFLDSWRKFHDALHKNRKDVTDSFYPAMRLILPQLERERMAYGIKETMLAKLYIELLNLPREGKDAQKLLNYRTPSGARTDAGDFAMIAYFVLKPRCLQKGSLTIQQVNELLDLVASNNSGKKKDLVKKSLLQLITQSSALEQKWLIRMIIKDLKLGISQQTIFSIFHNDAVELHNVTTDLEKVCRQLHDPSVGLSDISITLFSAFKPMLAAVADVERVEKDMKQQSFYIETKLDGERMQMHKDGALYRYFSRNGYNYTDQFGESPQEGSLTPFIHNAFGTDVQACILDGEMMAYNPTTQTFMQKGVKFDIKRMVEDSGLQTCYSVFDVLMVNKKKLGRETLRKRYEILSSTFTPIQGRIEIVQKTQAHTKKEVVDALNDAIDKREEGIMVKHPLSIYKPDKRGEGWLKIKPEYVSGLMDELDVLIVGGYWGKGSRGGMMSHFLCAVAETPPPGDRPSVFHTLCRVGSGYTMKELYDLGLKLAKYWKPFHKKSPPSSILCGTEKPEVYIEPQNSVIVQIKAAEIVPSDMYKTGSTLRFPRIEKIRDDKEWHECMTLGDLEQLRGKASGKLATKHLHVGDDDEPREKRRKPISKTKKAIRIIEHLKAPNLSNVNKVSNVFEDVEFCVMSGLDGYPKADLENRIAEFGGYIVQNPGPDTYCVIAGSENVRVKNIISSDKNDVVKPEWLLECFKTKTCVPWQPRFMIHMCPSTKQHFAREYDCYGDSYFVDTDLDQLKEVFLGIKPSEQQTPEEMAPVIADLECRYSWDHSPLSMFRHYTIYLDLYAVINDLSSRIEATRLGITALELRFHGAKVVSCLSEGVSHVIIGEDQRRVTDFKIFRRMLKKKFKILQESWVSDSVDKGELQEENQYLL.

Glu271, Thr272, Lys273, Leu274, Arg278, Glu331, Lys345, Phe367, Glu427, Lys432, Lys449, and Lys451 together coordinate ATP. Lys273 acts as the N6-AMP-lysine intermediate in catalysis. Glu331 serves as a coordination point for Mg(2+). Glu427 contacts Mg(2+). The required for catalytic activity stretch occupies residues 610-620; that stretch reads LATKHLHVGDD. 2 consecutive BRCT domains span residues 654 to 743 and 808 to 911; these read KVSN…PRFM and SPLS…QYLL.

It belongs to the ATP-dependent DNA ligase family. Interacts with XRCC4; the LIG4-XRCC4 subcomplex has a 1:2 stoichiometry and XRCC4 is required for LIG4 stability. Component of the core long-range non-homologous end joining (NHEJ) complex (also named DNA-PK complex) composed of PRKDC, LIG4, XRCC4, XRCC6/Ku70, XRCC5/Ku86 and NHEJ1/XLF. Additional component of the NHEJ complex includes PAXX. Following autophosphorylation, PRKDC dissociates from DNA, leading to formation of the short-range NHEJ complex, composed of LIG4, XRCC4, XRCC6/Ku70, XRCC5/Ku86 and NHEJ1/XLF. Interacts with DCLRE1C; the interaction is direct. Interacts with APLF. Mg(2+) is required as a cofactor.

The protein localises to the nucleus. It carries out the reaction ATP + (deoxyribonucleotide)n-3'-hydroxyl + 5'-phospho-(deoxyribonucleotide)m = (deoxyribonucleotide)n+m + AMP + diphosphate.. In terms of biological role, DNA ligase involved in DNA non-homologous end joining (NHEJ); required for double-strand break (DSB) repair and V(D)J recombination. Catalyzes the NHEJ ligation step of the broken DNA during DSB repair by resealing the DNA breaks after the gap filling is completed. Joins single-strand breaks in a double-stranded polydeoxynucleotide in an ATP-dependent reaction. LIG4 is mechanistically flexible: it can ligate nicks as well as compatible DNA overhangs alone, while in the presence of XRCC4, it can ligate ends with 2-nucleotides (nt) microhomology and 1-nt gaps. Forms a subcomplex with XRCC4; the LIG4-XRCC4 subcomplex is responsible for the NHEJ ligation step and XRCC4 enhances the joining activity of LIG4. Binding of the LIG4-XRCC4 complex to DNA ends is dependent on the assembly of the DNA-dependent protein kinase complex DNA-PK to these DNA ends. LIG4 regulates nuclear localization of XRCC4. The chain is DNA ligase 4 from Mus musculus (Mouse).